The chain runs to 285 residues: Bifunctional protein FolD (285 aa).

Residues Gly165–Ser167 and Ile232 contribute to the NADP(+) site.

This sequence belongs to the tetrahydrofolate dehydrogenase/cyclohydrolase family. Homodimer.

The catalysed reaction is (6R)-5,10-methylene-5,6,7,8-tetrahydrofolate + NADP(+) = (6R)-5,10-methenyltetrahydrofolate + NADPH. The enzyme catalyses (6R)-5,10-methenyltetrahydrofolate + H2O = (6R)-10-formyltetrahydrofolate + H(+). Its pathway is one-carbon metabolism; tetrahydrofolate interconversion. Functionally, catalyzes the oxidation of 5,10-methylenetetrahydrofolate to 5,10-methenyltetrahydrofolate and then the hydrolysis of 5,10-methenyltetrahydrofolate to 10-formyltetrahydrofolate. The chain is Bifunctional protein FolD from Sulfurihydrogenibium sp. (strain YO3AOP1).